The sequence spans 285 residues: Hypersensitive-induced response protein 3 (285 aa).

A lipid anchor (N-myristoyl glycine) is attached at G2. 2 coiled-coil regions span residues N113–Y139 and N165–Q185.

In terms of assembly, self-interacts and forms heteromers. Interacts with NB-LRR class of R proteins before R proteins (e.g. RPS2 or RPM1) are activated by the effectors.

The protein resides in the cell membrane. This is Hypersensitive-induced response protein 3 (HIR3) from Arabidopsis thaliana (Mouse-ear cress).